The primary structure comprises 260 residues: Membrane protein insertase YidC 1 (260 aa).

Residues 1–22 (MLKSYRAVLVSLSLLFVFVLSG) form the signal peptide. Cysteine 23 carries N-palmitoyl cysteine lipidation. Cysteine 23 carries the S-diacylglycerol cysteine lipid modification. Transmembrane regions (helical) follow at residues 29 to 49 (IDAHSTGIWDHYFVYPISFMI), 52 to 72 (VAHHIPGASFGIAIIIMTLVI), 133 to 153 (LAGCWPLLIQMPIFSALYYAI), 164 to 184 (FLWVNLGHADPYHILPIIAAL), and 213 to 233 (MPAMILFMGFAAPSGLVLYWI).

It belongs to the OXA1/ALB3/YidC family. Type 2 subfamily.

The protein resides in the cell membrane. Functionally, required for the insertion and/or proper folding and/or complex formation of integral membrane proteins into the membrane. Involved in integration of membrane proteins that insert both dependently and independently of the Sec translocase complex, as well as at least some lipoproteins. This chain is Membrane protein insertase YidC 1, found in Bacillus cereus (strain ATCC 14579 / DSM 31 / CCUG 7414 / JCM 2152 / NBRC 15305 / NCIMB 9373 / NCTC 2599 / NRRL B-3711).